Reading from the N-terminus, the 681-residue chain is UvrABC system protein C (681 aa).

Residues 16–95 (DSPGVYKFRD…IKEYDPRFNV (80 aa)) form the GIY-YIG domain. A UVR domain is found at 208-243 (GTYIRRLERQMTDAAEEMEYEKAARLRDDIGALKKA). A disordered region spans residues 650–681 (EIMEDEEPGTTAGSSQEPVSAGTSDERRGQET). Residues 660–672 (TAGSSQEPVSAGT) show a composition bias toward polar residues.

It belongs to the UvrC family. Interacts with UvrB in an incision complex.

Its subcellular location is the cytoplasm. In terms of biological role, the UvrABC repair system catalyzes the recognition and processing of DNA lesions. UvrC both incises the 5' and 3' sides of the lesion. The N-terminal half is responsible for the 3' incision and the C-terminal half is responsible for the 5' incision. The chain is UvrABC system protein C from Streptomyces avermitilis (strain ATCC 31267 / DSM 46492 / JCM 5070 / NBRC 14893 / NCIMB 12804 / NRRL 8165 / MA-4680).